The following is a 311-amino-acid chain: Ribonuclease HIII (311 aa).

The RNase H type-2 domain maps to 95 to 311; sequence MSIVGSDEVG…NTEKAFRLLK (217 aa). A divalent metal cation contacts are provided by D101, E102, and D206.

This sequence belongs to the RNase HII family. RnhC subfamily. Mn(2+) is required as a cofactor. The cofactor is Mg(2+).

It localises to the cytoplasm. It carries out the reaction Endonucleolytic cleavage to 5'-phosphomonoester.. Endonuclease that specifically degrades the RNA of RNA-DNA hybrids. The polypeptide is Ribonuclease HIII (Bacillus cereus (strain AH187)).